We begin with the raw amino-acid sequence, 299 residues long: Mitochondrial magnesium exporter 1 (299 aa).

3 Solcar repeats span residues 12–103 (SNPV…GKRL), 112–200 (LTYP…LQEL), and 210–296 (ISTT…TNDL). A run of 4 helical transmembrane segments spans residues 79–99 (ISAP…VYAA), 114–134 (YPQI…VTVP), 216–236 (ILSG…FDVL), and 272–292 (ILPI…GVEL).

The protein belongs to the mitochondrial carrier (TC 2.A.29) family.

The protein localises to the mitochondrion membrane. In terms of biological role, mediates efflux of magnesium ions from mitochondria, suggesting a role in magnesium homeostasis. This chain is Mitochondrial magnesium exporter 1, found in Drosophila melanogaster (Fruit fly).